We begin with the raw amino-acid sequence, 131 residues long: C-glycoside deglycosidase beta subunit (131 aa).

It belongs to the C-glycoside deglycosidase beta subunit family. Heterodimer composed of an alpha subunit (CarB) and a beta subunit (CarC). Requires a divalent metal cation as cofactor.

The catalysed reaction is 3''-dehydroisovitexin = 1,5-anhydro-D-erythro-hex-1-en-3-ulose + apigenin. The enzyme catalyses 3''-dehydroisoorientin = 1,5-anhydro-D-erythro-hex-1-en-3-ulose + luteolin. In terms of biological role, carbon-carbon bond-cleaving enzyme which participates in the metabolism of C-glycosides. Acts on the C6-glycosylated compounds 3''-dehydroisovitexin (3''-oxo-isovitexin) and 3''-dehydroisoorientin (3''-oxo-homoorientin). Shows weak activity with 3'-dehydromangiferin (3'-oxo-mangiferin). This is C-glycoside deglycosidase beta subunit from Microbacterium trichothecenolyticum (Aureobacterium trichothecenolyticum).